The following is a 256-amino-acid chain: DNA repair protein RecO (256 aa).

Belongs to the RecO family.

Involved in DNA repair and RecF pathway recombination. This chain is DNA repair protein RecO, found in Nocardia farcinica (strain IFM 10152).